A 420-amino-acid polypeptide reads, in one-letter code: Putative T-box protein 33 (420 aa).

A DNA-binding region (T-box) is located at residues 93–291 (LWKELHYLSN…ANPTSRGDAK (199 aa)). Residues 395–412 (SPPLQPTATSPEASQNQI) show a composition bias toward polar residues. The disordered stretch occupies residues 395–420 (SPPLQPTATSPEASQNQIKLEMNQYM).

The protein localises to the nucleus. The sequence is that of Putative T-box protein 33 (tbx-33) from Caenorhabditis elegans.